Consider the following 131-residue polypeptide: Small ribosomal subunit protein uS11 (131 aa).

Belongs to the universal ribosomal protein uS11 family. In terms of assembly, part of the 30S ribosomal subunit. Interacts with proteins S7 and S18. Binds to IF-3.

In terms of biological role, located on the platform of the 30S subunit, it bridges several disparate RNA helices of the 16S rRNA. Forms part of the Shine-Dalgarno cleft in the 70S ribosome. This Trichormus variabilis (strain ATCC 29413 / PCC 7937) (Anabaena variabilis) protein is Small ribosomal subunit protein uS11.